The sequence spans 138 residues: Basic phospholipase A2 homolog TM-N49 (138 aa).

A signal peptide spans 1 to 16; it reads MRTLWIMAVLLLGVEG. Intrachain disulfides connect Cys42/Cys131, Cys44/Cys60, Cys59/Cys111, Cys65/Cys138, Cys66/Cys104, Cys73/Cys97, and Cys91/Cys102.

It belongs to the phospholipase A2 family. Group II subfamily. N49 sub-subfamily. As to quaternary structure, homodimer; non-covalently linked. As to expression, expressed by the venom gland.

Its subcellular location is the secreted. Its function is as follows. Snake venom phospholipase A2 (PLA2) that exhibits potent myotoxic activity causing inflammatory cell infiltration, severe myoedema, myonecrosis and myolysis in the gastrocnemius muscles of BALB/c mice. This chain is Basic phospholipase A2 homolog TM-N49, found in Protobothrops mucrosquamatus (Taiwan habu).